A 491-amino-acid chain; its full sequence is MANYFNTLNLRQQLAQLGKCRFMGRDEFADGASYLQGKKVVIVGCGAQGLNQGLNMRDSGLDIAYALRKEAIAEKRASWRKATENGFKVGTYEELIPQADLVVNLTPDKQHSDVVRSVQPLMKDGAALGYSHGFNIVEVGEQIRKDITVVMVAPKCPGTEVREEYKRGFGVPTLIAVHPENDPKGEGMAIAKAWAAATGGHRAGVLESSFVAEVKSDLMGEQTILCGMLQAGSLLCFDKLVAEGTDPAYAEKLIQFGWETITEALKQGGITLMMDRLSNPAKLRAYALSEQLKEIMTPLFQKHMDDIISGEFSSGMMADWANDDKKLLTWREETGKTAFETAPQFEGKIGEQEYFDKGVLMIAMVKAGVELAFETMVDSGIIEESAYYESLHELPLIANTIARKRLYEMNVVISDTAEYGNYLFSYACVPLLKPFMAELQPGDLGSAIPEGAVDNAQLRDVNDAIRSHAIEQVGKKLRGYMTDMKRIAVAG.

A KARI N-terminal Rossmann domain is found at 15-208 (AQLGKCRFMG…GGHRAGVLES (194 aa)). NADP(+) is bound by residues 45–48 (CGAQ), R68, R76, S78, and 108–110 (DKQ). H132 is an active-site residue. G158 provides a ligand contact to NADP(+). 2 consecutive KARI C-terminal knotted domains span residues 209-344 (SFVA…TAPQ) and 345-484 (FEGK…MTDM). Mg(2+) contacts are provided by D217, E221, E389, and E393. Residue S414 coordinates substrate.

It belongs to the ketol-acid reductoisomerase family. The cofactor is Mg(2+).

The catalysed reaction is (2R)-2,3-dihydroxy-3-methylbutanoate + NADP(+) = (2S)-2-acetolactate + NADPH + H(+). It carries out the reaction (2R,3R)-2,3-dihydroxy-3-methylpentanoate + NADP(+) = (S)-2-ethyl-2-hydroxy-3-oxobutanoate + NADPH + H(+). It participates in amino-acid biosynthesis; L-isoleucine biosynthesis; L-isoleucine from 2-oxobutanoate: step 2/4. Its pathway is amino-acid biosynthesis; L-valine biosynthesis; L-valine from pyruvate: step 2/4. In terms of biological role, involved in the biosynthesis of branched-chain amino acids (BCAA). Catalyzes an alkyl-migration followed by a ketol-acid reduction of (S)-2-acetolactate (S2AL) to yield (R)-2,3-dihydroxy-isovalerate. In the isomerase reaction, S2AL is rearranged via a Mg-dependent methyl migration to produce 3-hydroxy-3-methyl-2-ketobutyrate (HMKB). In the reductase reaction, this 2-ketoacid undergoes a metal-dependent reduction by NADPH to yield (R)-2,3-dihydroxy-isovalerate. The protein is Ketol-acid reductoisomerase (NADP(+)) of Salmonella heidelberg (strain SL476).